The chain runs to 1206 residues: uncharacterized protein (1206 aa).

Disordered regions lie at residues 133–547 (YDLD…PVDY), 568–837 (FASS…DQLL), and 859–1206 (RQRA…KATS). Composition is skewed to pro residues over residues 139-151 (IPPP…PGPP) and 159-234 (GESP…PPAP). Serine 255 carries the phosphoserine modification. Residues 305 to 319 (VRTSSIPVQEAPGAS) are compositionally biased toward low complexity. Residues 351-363 (RALEPEQPREPRP) are compositionally biased toward basic and acidic residues. Residues 384–413 (APPPAPPLPPPAPPLPPPAPSLPPAAPPLP) show a composition bias toward pro residues. The segment covering 414–436 (STELAAPPSSGFMKTSKSNSPAL) has biased composition (low complexity). The segment covering 454–467 (VDWRDPRQMEKLRS) has biased composition (basic and acidic residues). A compositionally biased stretch (low complexity) spans 522 to 531 (PEKSPSSSSL). A compositionally biased stretch (basic and acidic residues) spans 568 to 577 (FASSAEKEAK). Over residues 656–671 (LPKATPGLTLPLKPTP) the composition is skewed to low complexity. A Phosphothreonine modification is found at threonine 680. Residues 732–747 (AEKDLASVRQREKPET) are compositionally biased toward basic and acidic residues. Positions 1001–1016 (IPPPPEFSNDPEPPAP) are enriched in pro residues. Residues 1028 to 1041 (PRNNFSDLGQSWGP) are compositionally biased toward polar residues. 3 positions are modified to omega-N-methylarginine: arginine 1051, arginine 1083, and arginine 1094. Positions 1170 to 1184 (PHGNTHYGSPINTFT) are enriched in polar residues.

This is an uncharacterized protein from Mus musculus (Mouse).